We begin with the raw amino-acid sequence, 273 residues long: Large ribosomal subunit protein uL2 (273 aa).

Positions 228-273 are disordered; that stretch reads VDHPHGGGEGKTSGGRHPVTPWGFSTKGKKTRKNKRTSKFIVKKRK. The segment covering 254 to 273 has biased composition (basic residues); that stretch reads KGKKTRKNKRTSKFIVKKRK.

The protein belongs to the universal ribosomal protein uL2 family. As to quaternary structure, part of the 50S ribosomal subunit. Forms a bridge to the 30S subunit in the 70S ribosome.

One of the primary rRNA binding proteins. Required for association of the 30S and 50S subunits to form the 70S ribosome, for tRNA binding and peptide bond formation. It has been suggested to have peptidyltransferase activity; this is somewhat controversial. Makes several contacts with the 16S rRNA in the 70S ribosome. This Rickettsia prowazekii (strain Madrid E) protein is Large ribosomal subunit protein uL2.